A 340-amino-acid polypeptide reads, in one-letter code: HPr kinase/phosphorylase (340 aa).

Residues His-153 and Lys-174 contribute to the active site. 168–175 (GNSGLGKS) provides a ligand contact to ATP. Ser-175 provides a ligand contact to Mg(2+). Asp-192 functions as the Proton acceptor; for phosphorylation activity. Proton donor; for dephosphorylation activity in the catalytic mechanism. Residues 216–225 (MEIRGLGVVD) are important for the catalytic mechanism of both phosphorylation and dephosphorylation. Residue Glu-217 participates in Mg(2+) binding. Arg-258 is an active-site residue. Residues 279-284 (PINPGK) form an important for the catalytic mechanism of dephosphorylation region.

It belongs to the HPrK/P family. In terms of assembly, homohexamer. Mg(2+) is required as a cofactor.

The catalysed reaction is [HPr protein]-L-serine + ATP = [HPr protein]-O-phospho-L-serine + ADP + H(+). It carries out the reaction [HPr protein]-O-phospho-L-serine + phosphate + H(+) = [HPr protein]-L-serine + diphosphate. Its function is as follows. Catalyzes the ATP- as well as the pyrophosphate-dependent phosphorylation of a specific serine residue in HPr, a phosphocarrier protein of the phosphoenolpyruvate-dependent sugar phosphotransferase system (PTS). HprK/P also catalyzes the pyrophosphate-producing, inorganic phosphate-dependent dephosphorylation (phosphorolysis) of seryl-phosphorylated HPr (P-Ser-HPr). The chain is HPr kinase/phosphorylase from Prosthecochloris aestuarii (strain DSM 271 / SK 413).